Here is a 326-residue protein sequence, read N- to C-terminus: Putative ankyrin repeat protein L25 (326 aa).

ANK repeat units lie at residues 11 to 40 (RSEY…DLNV), 42 to 65 (KLFY…NIHV), 66 to 95 (DDEF…DIHV), 96 to 125 (NDDA…DIHA), 127 to 154 (NELV…DIHA), 155 to 184 (EDDE…NFRA), 185 to 214 (ENDY…DIHA), 216 to 244 (DEYA…DIHA), 246 to 274 (NDYG…NIHA), and 275 to 304 (KDDY…NIHA).

The chain is Putative ankyrin repeat protein L25 from Acanthamoeba polyphaga mimivirus (APMV).